The following is a 1271-amino-acid chain: Protein flightless-1 homolog (1271 aa).

At Met-1 the chain carries N-acetylmethionine. An interaction with LRRFIP1 and LRRFIP2 region spans residues 1 to 427 (MEATGVLPFV…SGSKDPLARK (427 aa)). 16 LRR repeats span residues 7-32 (LPFVRGVDLSGNDFKGGYFPENVKAM), 33-55 (TSLRWLKLNRTGLCYLPEELAAL), 56-78 (QKLEHLSVSHNHLTTLHGELSSL), 80-103 (SLRAIVARANSLKNSGVPDDIFKL), 104-126 (DDLSVLDLSHNQLTECPRELENA), 127-149 (KNMLVLNLSHNGIDSIPNQLFIN), 150-173 (LTDLLYLDLSENRLESLPPQMRRL), 175-196 (HLQTLVLNGNPLLHAQLRQLPA), 197-222 (MMALQTLHLRNTQRTQSNLPTSLEGL), 223-245 (SNLSDVDLSCNDLTRVPECLYTL), 247-268 (SLRRLNLSSNQIAELSLCIDQW), 269-291 (VHLETLNLSRNQLTSLPSAICKL), 293-316 (KLKKLYLNSNKLDFDGLPSGIGKL), 317-339 (TSLEEFMAANNNLELIPESLCRC), 340-363 (PKLKKLVLNKNRLVTLPEAIHFLT), and 365-385 (IQVLDVRENPSLVMPPKPADR). Lys-21 bears the N6-acetyllysine mark. Position 406 is a phosphoserine (Ser-406). The residue at position 436 (Ser-436) is a Phosphoserine; by SGK3. Residues 495–827 (VGQLPGLTIW…VVSRSLEGTE (333 aa)) are interaction with ACTL6A. Gelsolin-like repeat units follow at residues 509-591 (FVPV…EEFL), 629-703 (NIKL…PGFW), and 759-831 (LMPG…AQVF). Ser-860 carries the post-translational modification Phosphoserine. A disordered region spans residues 951–977 (KTEDKEGKASAEAREGEEAAAEAEEKQ). The span at 952–967 (TEDKEGKASAEAREGE) shows a compositional bias: basic and acidic residues. Residues 968 to 977 (EAAAEAEEKQ) are compositionally biased toward acidic residues. One copy of the Gelsolin-like 4 repeat lies at 1183-1256 (KCSDFCQDDL…VRKGNEQRAF (74 aa)).

As to quaternary structure, interacts with actin, ACTL6A and NCOA2. Interacts with CARM1. Interacts with LRRFIP1, LRRFIP2 and MYD88. Upon LPS stimulation, LRRFIP2 competes for MYD88-binding; LRRFIP1 constitutively blocks the interaction with MyD88, even in the absence of LPS. Interacts with the nuclear receptors ESR1 and THRB. Interacts with SGK3. Interacts (via the gelsolin-like region) with TMOD1 and TMOD3. Interacts with LMOD2, VCL, GSN and DES. Expressed in blastocyst.

The protein resides in the nucleus. It is found in the cytoplasm. The protein localises to the cytoskeleton. Its subcellular location is the microtubule organizing center. It localises to the centrosome. The protein resides in the cell junction. It is found in the focal adhesion. The protein localises to the cell projection. Its subcellular location is the podosome. In terms of biological role, is a regulator of actin polymerization, required for proper myofibril organization and regulation of the length of sarcomeric thin filaments. It also plays a role in the assembly of cardiomyocyte cell adhesion complexes. Regulates cytoskeletal rearrangements involved in cytokinesis and cell migration, by inhibiting Rac1-dependent paxillin phosphorylation. May play a role as coactivator in transcriptional activation by hormone-activated nuclear receptors (NR) and acts in cooperation with NCOA2 and CARM1. Involved in estrogen hormone signaling. In Mus musculus (Mouse), this protein is Protein flightless-1 homolog (Flii).